A 311-amino-acid chain; its full sequence is Bifunctional protein FolD (311 aa).

NADP(+) contacts are provided by residues 184 to 186 (GAS), isoleucine 209, and isoleucine 250.

The protein belongs to the tetrahydrofolate dehydrogenase/cyclohydrolase family. Homodimer.

It carries out the reaction (6R)-5,10-methylene-5,6,7,8-tetrahydrofolate + NADP(+) = (6R)-5,10-methenyltetrahydrofolate + NADPH. The catalysed reaction is (6R)-5,10-methenyltetrahydrofolate + H2O = (6R)-10-formyltetrahydrofolate + H(+). The protein operates within one-carbon metabolism; tetrahydrofolate interconversion. In terms of biological role, catalyzes the oxidation of 5,10-methylenetetrahydrofolate to 5,10-methenyltetrahydrofolate and then the hydrolysis of 5,10-methenyltetrahydrofolate to 10-formyltetrahydrofolate. The protein is Bifunctional protein FolD of Gluconacetobacter diazotrophicus (strain ATCC 49037 / DSM 5601 / CCUG 37298 / CIP 103539 / LMG 7603 / PAl5).